A 217-amino-acid chain; its full sequence is 3,4-dihydroxy-2-butanone 4-phosphate synthase (217 aa).

D-ribulose 5-phosphate-binding positions include 37-38 (RE), Asp-42, 150-154 (RRGHT), and Glu-174. Residue Glu-38 coordinates Mg(2+). His-153 lines the Mg(2+) pocket.

The protein belongs to the DHBP synthase family. In terms of assembly, homodimer. The cofactor is Mg(2+). It depends on Mn(2+) as a cofactor.

It carries out the reaction D-ribulose 5-phosphate = (2S)-2-hydroxy-3-oxobutyl phosphate + formate + H(+). Its pathway is cofactor biosynthesis; riboflavin biosynthesis; 2-hydroxy-3-oxobutyl phosphate from D-ribulose 5-phosphate: step 1/1. Catalyzes the conversion of D-ribulose 5-phosphate to formate and 3,4-dihydroxy-2-butanone 4-phosphate. The sequence is that of 3,4-dihydroxy-2-butanone 4-phosphate synthase from Shewanella oneidensis (strain ATCC 700550 / JCM 31522 / CIP 106686 / LMG 19005 / NCIMB 14063 / MR-1).